Reading from the N-terminus, the 394-residue chain is Glycogen synthase kinase 1 (394 aa).

Residues 35 to 318 (YTQCKIVGNG…AIDAMVHPFF (284 aa)) form the Protein kinase domain. ATP-binding positions include 41 to 49 (VGNGSFGVV) and lysine 64.

This sequence belongs to the protein kinase superfamily. CMGC Ser/Thr protein kinase family. GSK-3 subfamily.

The protein localises to the cytoplasm. It carries out the reaction L-seryl-[protein] + ATP = O-phospho-L-seryl-[protein] + ADP + H(+). Protein kinase that acts downstream of the MPS1 MAPK cascade as a highly conservative signal modulator that dictates growth, conidiation and pathogenicity. Phosphorylates HAT1 at 'Ser-8' to block its translocation from the nucleus to the cytoplasm where HAT1 positively regulates appressorium development and pathogenicity. This is Glycogen synthase kinase 1 from Pyricularia oryzae (Rice blast fungus).